Consider the following 439-residue polypeptide: ATP-dependent protease ATPase subunit HslU (439 aa).

Residues Ile17, 59 to 64 (GVGKTE), Asp251, Glu317, and Arg389 contribute to the ATP site.

This sequence belongs to the ClpX chaperone family. HslU subfamily. A double ring-shaped homohexamer of HslV is capped on each side by a ring-shaped HslU homohexamer. The assembly of the HslU/HslV complex is dependent on binding of ATP.

It is found in the cytoplasm. ATPase subunit of a proteasome-like degradation complex; this subunit has chaperone activity. The binding of ATP and its subsequent hydrolysis by HslU are essential for unfolding of protein substrates subsequently hydrolyzed by HslV. HslU recognizes the N-terminal part of its protein substrates and unfolds these before they are guided to HslV for hydrolysis. The polypeptide is ATP-dependent protease ATPase subunit HslU (Campylobacter jejuni subsp. doylei (strain ATCC BAA-1458 / RM4099 / 269.97)).